A 2089-amino-acid chain; its full sequence is Non-reducing polyketide synthase PKS16 (2089 aa).

The segment at 8–243 (VLFGDQTVDP…IKLPITAAFH (236 aa)) is N-terminal acylcarrier protein transacylase (SAT) domain (SAT). A disordered region spans residues 342-364 (AGIEVSRSTEMQPRQEQRTKPRS). Basic and acidic residues predominate over residues 354–364 (PRQEQRTKPRS). Positions 364-793 (SSDIAIIGYA…GGNTSLLIED (430 aa)) constitute a Ketosynthase family 3 (KS3) domain. Residues Cys536, His671, and His710 each act as for beta-ketoacyl synthase activity in the active site. Residues 891–1214 (VFLFTGQGSQ…SIANAYNSGV (324 aa)) are malonyl-CoA:ACP transacylase (MAT) domain. The product template (PT) domain stretch occupies residues 1273 to 1586 (TTCLQVIENE…KRTTLQSLLG (314 aa)). Positions 1276 to 1408 (LQVIENETFT…CTVMYGDGHQ (133 aa)) are N-terminal hotdog fold. The PKS/mFAS DH domain occupies 1276 to 1582 (LQVIENETFT…FQQMKRTTLQ (307 aa)). Residue His1309 is the Proton acceptor; for dehydratase activity of the active site. The tract at residues 1435-1582 (IHRMLKEMIY…FQQMKRTTLQ (148 aa)) is C-terminal hotdog fold. Asp1495 serves as the catalytic Proton donor; for dehydratase activity. A Carrier 1 domain is found at 1617–1694 (QSPVAGFSKV…ELRAFFLDKM (78 aa)). Ser1654 is modified (O-(pantetheine 4'-phosphoryl)serine). A disordered region spans residues 1697-1730 (PQATANDDDSDDSSDDEGPGFSRSQSNSTISTPE). The segment covering 1702–1714 (NDDDSDDSSDDEG) has biased composition (acidic residues). A compositionally biased stretch (polar residues) spans 1718–1728 (SRSQSNSTIST). Residues 1729–1806 (PEEPDVVNVL…DVQKALGAAP (78 aa)) enclose the Carrier 2 domain. O-(pantetheine 4'-phosphoryl)serine is present on Ser1766. The thioesterase (TE) domain stretch occupies residues 1848–2083 (LFLLPDGAGS…VVGGNHFSIM (236 aa)).

The protein operates within secondary metabolite biosynthesis. Non-reducing polyketide synthase; part of the gene cluster that mediates the biosynthesis of orcinol depsidone grayanic acid (GRA), the only major secondary metabolite known in C.grayi. The first step consists in the ring and depside synthesis by PKS16 leading to 4-O-demethylsphaerophorin, involving different orcinol-like rings, one with acetyl CoA and the other with octanoyl CoA as the starter. Further depsidone formation by the GRA cluster-specific cytochrome P450 leads to 4-O-demethylgrayanic acid. Finally, the cluster specific O-methyltransferase probably converts the 4-O-demethylgrayanic acid into grayanic acid. This chain is Non-reducing polyketide synthase PKS16, found in Cladonia grayi (Gray's cup lichen).